Reading from the N-terminus, the 293-residue chain is uncharacterized protein (293 aa).

The HTH lysR-type domain maps to 1–58; it reads MQLQELHMLVVLAEELNMRKAAERLFVSQPALSQRLQTIEKAWGTKIFLRSQKGLTVT. Positions 18-37 form a DNA-binding region, H-T-H motif; it reads MRKAAERLFVSQPALSQRLQ.

This sequence belongs to the LysR transcriptional regulatory family.

This is an uncharacterized protein from Bacillus subtilis (strain 168).